Here is a 188-residue protein sequence, read N- to C-terminus: Threonylcarbamoyl-AMP synthase (188 aa).

The 181-residue stretch at 8–188 (EGAQPGLHAY…DLATGKILRA (181 aa)) folds into the YrdC-like domain.

This sequence belongs to the SUA5 family. TsaC subfamily.

It localises to the cytoplasm. It carries out the reaction L-threonine + hydrogencarbonate + ATP = L-threonylcarbamoyladenylate + diphosphate + H2O. Functionally, required for the formation of a threonylcarbamoyl group on adenosine at position 37 (t(6)A37) in tRNAs that read codons beginning with adenine. Catalyzes the conversion of L-threonine, HCO(3)(-)/CO(2) and ATP to give threonylcarbamoyl-AMP (TC-AMP) as the acyladenylate intermediate, with the release of diphosphate. The sequence is that of Threonylcarbamoyl-AMP synthase from Thiobacillus denitrificans (strain ATCC 25259 / T1).